The primary structure comprises 189 residues: UPF0301 protein RT0098 (189 aa).

It belongs to the UPF0301 (AlgH) family.

The polypeptide is UPF0301 protein RT0098 (Rickettsia typhi (strain ATCC VR-144 / Wilmington)).